The following is a 623-amino-acid chain: tRNA uridine 5-carboxymethylaminomethyl modification enzyme MnmG (623 aa).

12-17 serves as a coordination point for FAD; the sequence is GAGHAG. 272–286 serves as a coordination point for NAD(+); that stretch reads GPRYCPSIEDKINRF.

The protein belongs to the MnmG family. As to quaternary structure, homodimer. Heterotetramer of two MnmE and two MnmG subunits. FAD serves as cofactor.

The protein resides in the cytoplasm. In terms of biological role, NAD-binding protein involved in the addition of a carboxymethylaminomethyl (cmnm) group at the wobble position (U34) of certain tRNAs, forming tRNA-cmnm(5)s(2)U34. The protein is tRNA uridine 5-carboxymethylaminomethyl modification enzyme MnmG of Flavobacterium psychrophilum (strain ATCC 49511 / DSM 21280 / CIP 103535 / JIP02/86).